Reading from the N-terminus, the 83-residue chain is Acyl carrier protein (83 aa).

Residues 2-77 (NEILSKIKSI…DANQYIKKYL (76 aa)) form the Carrier domain. S37 carries the post-translational modification O-(pantetheine 4'-phosphoryl)serine.

This sequence belongs to the acyl carrier protein (ACP) family. In terms of processing, 4'-phosphopantetheine is transferred from CoA to a specific serine of apo-ACP by AcpS. This modification is essential for activity because fatty acids are bound in thioester linkage to the sulfhydryl of the prosthetic group.

It localises to the cytoplasm. It functions in the pathway lipid metabolism; fatty acid biosynthesis. Its function is as follows. Carrier of the growing fatty acid chain in fatty acid biosynthesis. This Karelsulcia muelleri (strain GWSS) (Sulcia muelleri) protein is Acyl carrier protein.